A 308-amino-acid polypeptide reads, in one-letter code: MAEKIKIGTMWLGGCSGCHLSIADFHEKIIDVMEHADFEFSPVLMDTKYDEIPELDVVIIEGGIVNDENREFAEELREKAKFVISYGTCAVYGGIPGLRNLWDKDEVIEEAYINSITTPNEEGVIPSEDVPHLEGRVKPLGEVIDVDFEVPGCPPRSDVAAEAVMALLTGEEIELPETNLCEVCPREKPPEGLAMDFIKRQFEVGKPEDDLCLIPQGLICMGPATVSICGAECPSIAIPCRGCYGPTARVEDQGAKMISAIASDYKVEEDKTVDPEEVAEQLDDIVGTFYTFTLPAALIPMKIQKEGK.

The protein belongs to the [NiFe]/[NiFeSe] hydrogenase small subunit family. The F420-non-reducing hydrogenase is composed of three subunits; MvhA, MvhD and MvhG. It forms a complex with the heterodisulfide reductase (hdr).

In terms of biological role, part of a complex that provides reducing equivalents for heterodisulfide reductase. This chain is F420-non-reducing hydrogenase subunit G (mvhG), found in Methanothermobacter thermautotrophicus (strain ATCC 29096 / DSM 1053 / JCM 10044 / NBRC 100330 / Delta H) (Methanobacterium thermoautotrophicum).